We begin with the raw amino-acid sequence, 338 residues long: 1-aminocyclopropane-1-carboxylate deaminase (338 aa).

K51 is subject to N6-(pyridoxal phosphate)lysine. Catalysis depends on S78, which acts as the Nucleophile.

It belongs to the ACC deaminase/D-cysteine desulfhydrase family. As to quaternary structure, homotrimer. It depends on pyridoxal 5'-phosphate as a cofactor.

The enzyme catalyses 1-aminocyclopropane-1-carboxylate + H2O = 2-oxobutanoate + NH4(+). Its function is as follows. Catalyzes a cyclopropane ring-opening reaction, the irreversible conversion of 1-aminocyclopropane-1-carboxylate (ACC) to ammonia and alpha-ketobutyrate. Allows growth on ACC as a nitrogen source. This Burkholderia pseudomallei (strain 1106a) protein is 1-aminocyclopropane-1-carboxylate deaminase.